The following is a 222-amino-acid chain: Chorionic somatomammotropin hormone-like 1 (222 aa).

Positions 1-26 are cleaved as a signal peptide; the sequence is MAAGSRTSLLLAFALLCLPWLQEAGA. Zn(2+) contacts are provided by histidine 44 and glutamate 205. Cysteine 213 and cysteine 220 are disulfide-bonded.

The protein belongs to the somatotropin/prolactin family.

It is found in the secreted. Functionally, may be a novel gestational hormone required to compensate for absence of other members of the GH/CS cluster during gestation. The polypeptide is Chorionic somatomammotropin hormone-like 1 (CSHL1) (Homo sapiens (Human)).